We begin with the raw amino-acid sequence, 372 residues long: Tyrosine--tRNA ligase (372 aa).

Positions 37, 169, 173, 176, and 191 each coordinate L-tyrosine. Positions 246 to 250 match the 'KMSKS' region motif; sequence KMSKS. Lys249 provides a ligand contact to ATP.

Belongs to the class-I aminoacyl-tRNA synthetase family. TyrS type 4 subfamily. Homodimer.

It localises to the cytoplasm. It catalyses the reaction tRNA(Tyr) + L-tyrosine + ATP = L-tyrosyl-tRNA(Tyr) + AMP + diphosphate + H(+). Its function is as follows. Catalyzes the attachment of tyrosine to tRNA(Tyr) in a two-step reaction: tyrosine is first activated by ATP to form Tyr-AMP and then transferred to the acceptor end of tRNA(Tyr). The protein is Tyrosine--tRNA ligase of Pyrobaculum arsenaticum (strain DSM 13514 / JCM 11321 / PZ6).